We begin with the raw amino-acid sequence, 179 residues long: Large ribosomal subunit protein uL5 (179 aa).

Belongs to the universal ribosomal protein uL5 family. In terms of assembly, part of the 50S ribosomal subunit; part of the 5S rRNA/L5/L18/L25 subcomplex. Contacts the 5S rRNA and the P site tRNA. Forms a bridge to the 30S subunit in the 70S ribosome.

Its function is as follows. This is one of the proteins that bind and probably mediate the attachment of the 5S RNA into the large ribosomal subunit, where it forms part of the central protuberance. In the 70S ribosome it contacts protein S13 of the 30S subunit (bridge B1b), connecting the 2 subunits; this bridge is implicated in subunit movement. Contacts the P site tRNA; the 5S rRNA and some of its associated proteins might help stabilize positioning of ribosome-bound tRNAs. The protein is Large ribosomal subunit protein uL5 of Clostridium perfringens (strain ATCC 13124 / DSM 756 / JCM 1290 / NCIMB 6125 / NCTC 8237 / Type A).